The primary structure comprises 459 residues: Exodeoxyribonuclease 7 large subunit (459 aa).

Belongs to the XseA family. Heterooligomer composed of large and small subunits.

Its subcellular location is the cytoplasm. The catalysed reaction is Exonucleolytic cleavage in either 5'- to 3'- or 3'- to 5'-direction to yield nucleoside 5'-phosphates.. Its function is as follows. Bidirectionally degrades single-stranded DNA into large acid-insoluble oligonucleotides, which are then degraded further into small acid-soluble oligonucleotides. In Pseudomonas fluorescens (strain Pf0-1), this protein is Exodeoxyribonuclease 7 large subunit.